A 252-amino-acid chain; its full sequence is Imidazole glycerol phosphate synthase subunit HisF (252 aa).

Catalysis depends on residues D11 and D130.

This sequence belongs to the HisA/HisF family. Heterodimer of HisH and HisF.

The protein resides in the cytoplasm. The catalysed reaction is 5-[(5-phospho-1-deoxy-D-ribulos-1-ylimino)methylamino]-1-(5-phospho-beta-D-ribosyl)imidazole-4-carboxamide + L-glutamine = D-erythro-1-(imidazol-4-yl)glycerol 3-phosphate + 5-amino-1-(5-phospho-beta-D-ribosyl)imidazole-4-carboxamide + L-glutamate + H(+). It functions in the pathway amino-acid biosynthesis; L-histidine biosynthesis; L-histidine from 5-phospho-alpha-D-ribose 1-diphosphate: step 5/9. Functionally, IGPS catalyzes the conversion of PRFAR and glutamine to IGP, AICAR and glutamate. The HisF subunit catalyzes the cyclization activity that produces IGP and AICAR from PRFAR using the ammonia provided by the HisH subunit. The chain is Imidazole glycerol phosphate synthase subunit HisF from Bacillus cereus (strain Q1).